Consider the following 100-residue polypeptide: Apolipoprotein C-II (100 aa).

A signal peptide spans 1–22 (MGSRFLLALFLVLLVLGCEVQA). Residues 66 to 74 (SVDEKLRDM) are lipid binding. The lipoprotein lipase cofactor stretch occupies residues 78–100 (SSAAMTTYASIFTDQILTLLKGE).

Belongs to the apolipoprotein C2 family. Post-translationally, proapolipoprotein C-II is synthesized as a sialic acid containing glycoprotein which is subsequently desialylated prior to its proteolytic processing. In terms of processing, proapolipoprotein C-II, the major form found in plasma undergoes proteolytic cleavage of its N-terminal hexapeptide to generate the mature form apolipoprotein C-II, which occurs as the minor form in plasma.

It is found in the secreted. Its function is as follows. Component of chylomicrons, very low-density lipoproteins (VLDL), low-density lipoproteins (LDL), and high-density lipoproteins (HDL) in plasma. Plays an important role in lipoprotein metabolism as an activator of lipoprotein lipase. This chain is Apolipoprotein C-II (APOC2), found in Ellobius talpinus (Northern mole vole).